A 200-amino-acid polypeptide reads, in one-letter code: MSGFKQHTGLVVPLDAANVDTDAIIPKQFLQKVSRLGFGKHLFHDWRFLDDVGEQPNPEFVMNAPRYQGASILLARENFGCGSSREHAPWALADYGIKAMIAPSFADIFYGNSINNQMVPVRLTEQEVDEIFQFVEANEGAEVEVDLEANVVRANGKEYGFEIDSFRRHCLLNGLDNIGLTLQHEDKIAEYEANIPSFLS.

Belongs to the LeuD family. LeuD type 1 subfamily. As to quaternary structure, heterodimer of LeuC and LeuD.

The catalysed reaction is (2R,3S)-3-isopropylmalate = (2S)-2-isopropylmalate. It participates in amino-acid biosynthesis; L-leucine biosynthesis; L-leucine from 3-methyl-2-oxobutanoate: step 2/4. In terms of biological role, catalyzes the isomerization between 2-isopropylmalate and 3-isopropylmalate, via the formation of 2-isopropylmaleate. In Vibrio campbellii (strain ATCC BAA-1116), this protein is 3-isopropylmalate dehydratase small subunit.